The sequence spans 548 residues: CTP synthase (548 aa).

Residues Met-1–Ile-265 form an amidoligase domain region. Residue Ser-13 participates in CTP binding. UTP is bound at residue Ser-13. ATP-binding positions include Ser-14–Ile-19 and Asp-71. The Mg(2+) site is built by Asp-71 and Glu-139. CTP-binding positions include Asp-146–Glu-148, Lys-186–Gln-191, and Lys-222. UTP-binding positions include Lys-186–Gln-191 and Lys-222. The 252-residue stretch at Asn-290–Ala-541 folds into the Glutamine amidotransferase type-1 domain. L-glutamine is bound at residue Gly-351. Cys-378 serves as the catalytic Nucleophile; for glutamine hydrolysis. L-glutamine is bound by residues Leu-379–Gln-382, Glu-402, and Arg-469. Active-site residues include His-514 and Glu-516.

It belongs to the CTP synthase family. In terms of assembly, homotetramer.

It carries out the reaction UTP + L-glutamine + ATP + H2O = CTP + L-glutamate + ADP + phosphate + 2 H(+). It catalyses the reaction L-glutamine + H2O = L-glutamate + NH4(+). The catalysed reaction is UTP + NH4(+) + ATP = CTP + ADP + phosphate + 2 H(+). Its pathway is pyrimidine metabolism; CTP biosynthesis via de novo pathway; CTP from UDP: step 2/2. With respect to regulation, allosterically activated by GTP, when glutamine is the substrate; GTP has no effect on the reaction when ammonia is the substrate. The allosteric effector GTP functions by stabilizing the protein conformation that binds the tetrahedral intermediate(s) formed during glutamine hydrolysis. Inhibited by the product CTP, via allosteric rather than competitive inhibition. Functionally, catalyzes the ATP-dependent amination of UTP to CTP with either L-glutamine or ammonia as the source of nitrogen. Regulates intracellular CTP levels through interactions with the four ribonucleotide triphosphates. This chain is CTP synthase, found in Chromohalobacter salexigens (strain ATCC BAA-138 / DSM 3043 / CIP 106854 / NCIMB 13768 / 1H11).